The chain runs to 336 residues: Probable G-protein coupled receptor 160 (336 aa).

The Extracellular segment spans residues 1 to 20 (MTALSSKNCSLQYQLHQSPQ). The N-linked (GlcNAc...) asparagine glycan is linked to Asn8. Residues 21–41 (LLEASCLLFLIILGKVLLNIL) form a helical membrane-spanning segment. Residues 42–56 (LLRVRRGDARWTLME) lie on the Cytoplasmic side of the membrane. The chain crosses the membrane as a helical span at residues 57 to 77 (YFCFSLALVDLLLLVNISILT). At 78-95 (YFRDFVVLGIRFTRYHIC) the chain is on the extracellular side. Residues 96-116 (LLTQIISFTYGFLHYPVCSLA) traverse the membrane as a helical segment. Over 117 to 136 (CIDYWCNLSRASKQSSRWQK) the chain is Cytoplasmic. The chain crosses the membrane as a helical span at residues 137 to 157 (LLYFLTVILTWISVLAYVLVD). The Extracellular portion of the chain corresponds to 158 to 186 (PAISVSLKAHRGYVYQCPAYVSTQSHWLS). Residues 187 to 207 (LSMLMVLFVAFLISWQEVVAL) form a helical membrane-spanning segment. At 208-243 (LQAMRIASYKSKAALYFPFPLHCGYALSCREALLPR) the chain is on the cytoplasmic side. The chain crosses the membrane as a helical span at residues 244-264 (LIVCFLGTWFPFVALQVLILS). Residues 265-272 (LRVQIPAY) are Extracellular-facing. A helical transmembrane segment spans residues 273-293 (IEMNVPWLYFVNSFLIAAVYW). At 294-336 (FNCHKLDLRDSSLPVDPFINWKCCFVPVHRLKQVERPMSIVIC) the chain is on the cytoplasmic side.

This sequence belongs to the G-protein coupled receptor 1 family.

The protein localises to the cell membrane. Functionally, orphan receptor. This Mus musculus (Mouse) protein is Probable G-protein coupled receptor 160 (Gpr160).